Consider the following 301-residue polypeptide: Glycerol-3-phosphate dehydrogenase [NAD(P)+] (301 aa).

Residues W13, R33, and K78 each coordinate NADPH. Residues K78 and G106 each contribute to the sn-glycerol 3-phosphate site. A110 contributes to the NADPH binding site. 5 residues coordinate sn-glycerol 3-phosphate: K161, D214, S224, R225, and N226. Residue K161 is the Proton acceptor of the active site. Residue R225 participates in NADPH binding. NADPH is bound at residue E251.

This sequence belongs to the NAD-dependent glycerol-3-phosphate dehydrogenase family.

The protein resides in the cytoplasm. The enzyme catalyses sn-glycerol 3-phosphate + NAD(+) = dihydroxyacetone phosphate + NADH + H(+). It catalyses the reaction sn-glycerol 3-phosphate + NADP(+) = dihydroxyacetone phosphate + NADPH + H(+). Its pathway is membrane lipid metabolism; glycerophospholipid metabolism. Functionally, catalyzes the reduction of the glycolytic intermediate dihydroxyacetone phosphate (DHAP) to sn-glycerol 3-phosphate (G3P), the key precursor for phospholipid synthesis. The polypeptide is Glycerol-3-phosphate dehydrogenase [NAD(P)+] (Synechococcus sp. (strain RCC307)).